A 160-amino-acid chain; its full sequence is 3-dehydroquinate dehydratase (160 aa).

Tyr22 acts as the Proton acceptor in catalysis. Substrate is bound by residues Asn73, His79, and Asp86. His99 (proton donor) is an active-site residue. Substrate-binding positions include 100–101 (IS) and Arg110.

This sequence belongs to the type-II 3-dehydroquinase family. Homododecamer.

The catalysed reaction is 3-dehydroquinate = 3-dehydroshikimate + H2O. It functions in the pathway metabolic intermediate biosynthesis; chorismate biosynthesis; chorismate from D-erythrose 4-phosphate and phosphoenolpyruvate: step 3/7. In terms of biological role, catalyzes a trans-dehydration via an enolate intermediate. The chain is 3-dehydroquinate dehydratase from Campylobacter lari (strain RM2100 / D67 / ATCC BAA-1060).